We begin with the raw amino-acid sequence, 327 residues long: Phenylalanine--tRNA ligase alpha subunit (327 aa).

Residue Glu-252 coordinates Mg(2+).

The protein belongs to the class-II aminoacyl-tRNA synthetase family. Phe-tRNA synthetase alpha subunit type 1 subfamily. In terms of assembly, tetramer of two alpha and two beta subunits. It depends on Mg(2+) as a cofactor.

It localises to the cytoplasm. The enzyme catalyses tRNA(Phe) + L-phenylalanine + ATP = L-phenylalanyl-tRNA(Phe) + AMP + diphosphate + H(+). In Edwardsiella ictaluri (strain 93-146), this protein is Phenylalanine--tRNA ligase alpha subunit.